Consider the following 137-residue polypeptide: Basic phospholipase A2 3 (137 aa).

Residues 1 to 11 (LVAVCVSLLGA) form the signal peptide. A propeptide spanning residues 12-19 (ANIPPQPL) is cleaved from the precursor. 7 cysteine pairs are disulfide-bonded: cysteine 30-cysteine 89, cysteine 44-cysteine 136, cysteine 46-cysteine 62, cysteine 61-cysteine 117, cysteine 68-cysteine 110, cysteine 78-cysteine 103, and cysteine 96-cysteine 108. 3 residues coordinate Ca(2+): tyrosine 45, glycine 47, and glycine 49. Residue histidine 65 is part of the active site. Residue aspartate 66 coordinates Ca(2+). Aspartate 111 is an active-site residue.

Belongs to the phospholipase A2 family. Group I subfamily. D49 sub-subfamily. As to quaternary structure, monomer, or homotrimer. Was firstly described as a trimer, but has been reinterpreted with the possibility of being a monomer. Ca(2+) serves as cofactor. Expressed by the venom gland.

It localises to the secreted. It catalyses the reaction a 1,2-diacyl-sn-glycero-3-phosphocholine + H2O = a 1-acyl-sn-glycero-3-phosphocholine + a fatty acid + H(+). In terms of biological role, snake venom phospholipase A2 (PLA2) that shows anticoagulant and neurotoxic activities. PLA2 catalyzes the calcium-dependent hydrolysis of the 2-acyl groups in 3-sn-phosphoglycerides. The protein is Basic phospholipase A2 3 of Bungarus caeruleus (Indian krait).